We begin with the raw amino-acid sequence, 421 residues long: 4-aminobutyrate aminotransferase PuuE (421 aa).

Pyridoxal 5'-phosphate is bound by residues 110–111 (GA) and 238–241 (DEVQ). K267 is modified (N6-(pyridoxal phosphate)lysine). T296 serves as a coordination point for pyridoxal 5'-phosphate.

The protein belongs to the class-III pyridoxal-phosphate-dependent aminotransferase family. Pyridoxal 5'-phosphate is required as a cofactor.

The enzyme catalyses 4-aminobutanoate + 2-oxoglutarate = succinate semialdehyde + L-glutamate. It functions in the pathway amine and polyamine degradation; putrescine degradation; succinate semialdehyde from 4-aminobutanoate. Completely inhibited by succinate and low-aeration conditions. In terms of biological role, catalyzes the transfer of the amino group from gamma-aminobutyrate (GABA) to alpha-ketoglutarate (KG) to yield succinic semialdehyde (SSA). PuuE is important for utilization of putrescine as the sole nitrogen or carbon source. This Escherichia coli (strain K12) protein is 4-aminobutyrate aminotransferase PuuE (puuE).